A 469-amino-acid chain; its full sequence is UDP-N-acetylmuramate--L-alanine ligase (469 aa).

Gly-118–Thr-124 is an ATP binding site.

This sequence belongs to the MurCDEF family.

The protein localises to the cytoplasm. It catalyses the reaction UDP-N-acetyl-alpha-D-muramate + L-alanine + ATP = UDP-N-acetyl-alpha-D-muramoyl-L-alanine + ADP + phosphate + H(+). The protein operates within cell wall biogenesis; peptidoglycan biosynthesis. Cell wall formation. This Ruegeria sp. (strain TM1040) (Silicibacter sp.) protein is UDP-N-acetylmuramate--L-alanine ligase.